The sequence spans 147 residues: MVHLTDAEKAAVSCLWGKVNSDEVGGEALGRLLVVYPWTQRYFDSFGDLSSASAIMGNAKVKAHGKKVITAFNDGLNHLDSLKGTFASLSELHCDKLHVDPENFRLLGNMIVIVLGHHLGKDFTPAAQAAFQKVVAGVATALAHKYH.

At V2 the chain carries N-acetylvaline. The Globin domain maps to 3-147 (HLTDAEKAAV…VATALAHKYH (145 aa)). K18 carries the N6-succinyllysine modification. S21, S45, and S51 each carry phosphoserine. K60 carries the N6-succinyllysine modification. Heme b contacts are provided by H64 and H93. R105 carries the asymmetric dimethylarginine modification. Position 124 is a phosphothreonine (T124).

Belongs to the globin family. As to quaternary structure, heterotetramer of two alpha chains and two beta chains. As to expression, red blood cells.

Its function is as follows. Involved in oxygen transport from the lung to the various peripheral tissues. The protein is Hemoglobin subunit beta-1 (Hbb-b1) of Mus musculus (Mouse).